A 153-amino-acid chain; its full sequence is Transcriptional repressor NrdR (153 aa).

Residues 3-34 (CPSCQHHGTRVLDSRPVDEGRSIRRRRECEQC) fold into a zinc finger. Positions 49-139 (LIVVKKQGMR…VYRQFKDLNV (91 aa)) constitute an ATP-cone domain.

This sequence belongs to the NrdR family. Requires Zn(2+) as cofactor.

Functionally, negatively regulates transcription of bacterial ribonucleotide reductase nrd genes and operons by binding to NrdR-boxes. In Geobacillus sp. (strain WCH70), this protein is Transcriptional repressor NrdR.